The primary structure comprises 241 residues: Orotidine 5'-phosphate decarboxylase (241 aa).

Substrate is bound by residues Asp-15, Lys-37, 64-73 (DLKYHDIPNT), Thr-126, Arg-187, Gln-196, Gly-216, and Arg-217. The active-site Proton donor is Lys-66.

Belongs to the OMP decarboxylase family. Type 1 subfamily. Homodimer.

It catalyses the reaction orotidine 5'-phosphate + H(+) = UMP + CO2. It functions in the pathway pyrimidine metabolism; UMP biosynthesis via de novo pathway; UMP from orotate: step 2/2. Functionally, catalyzes the decarboxylation of orotidine 5'-monophosphate (OMP) to uridine 5'-monophosphate (UMP). The polypeptide is Orotidine 5'-phosphate decarboxylase (Geotalea uraniireducens (strain Rf4) (Geobacter uraniireducens)).